A 309-amino-acid polypeptide reads, in one-letter code: MASSSHNPVILLKRILSLTESSPFILCLDSIAQTSYKLIQEFVHQSKSKGNEYPIVYISFETVNKPSYCTQFIDATQMDFVHLVKQIISYLPAATATQAKKHMVIIDSLNYISTEYITRFLSEIASPHCTMVATYHKDIKDENRTVIPDWNNNYPDKLTLLQFMATTIVDIDVVLTGTLDTEEVSELLNEFRIPRGLNNDIFQLRLVNKRKSGRSLEYDFIVNSNTHEYELLSTTKQEEESSSNGLETPEMLQGLTTFNLGTSNKQKLAKDQVALPFLEAQSFGQGGAIVYEYEKDDDYDEEDPYEDPF.

Ser3 and Ser4 each carry phosphoserine.

It belongs to the ELP5 family. Component of the elongator complex, which consists of ELP1/IKI3, ELP2, ELP3, ELP4, ELP5/IKI1 and ELP6. The elongator complex is composed of two copies of the Elp123 subcomplex (composed of ELP1/IKI3, ELP2 and ELP3) and two copies of the Elp456 subcomplex (composed of ELP4, ELP5/IKI1 and ELP6). The Elp123 subcomplex forms a two-lobed scaffold, which binds the Elp456 subcomplex asymmetrically. In each lobe, ELP2 is tightly sandwiched between ELP1/IKI3 and ELP3. The Elp123 subcomplex binds tRNA through ELP1/IKI3 and ELP3 and can bind 2 tRNAs simultaneously. tRNA-binding by the Elp123 subcomplex induces conformational rearrangements which precisely position the targeted anticodon base in the active site. The Elp456 subcomplex binds tRNA and has ATPase activity. Interacts with KTI11/DPH3.

The protein resides in the cytoplasm. The protein localises to the nucleus. Its pathway is tRNA modification; 5-methoxycarbonylmethyl-2-thiouridine-tRNA biosynthesis. In terms of biological role, component of the elongator complex which is required for multiple tRNA modifications, including mcm5U (5-methoxycarbonylmethyl uridine), mcm5s2U (5-methoxycarbonylmethyl-2-thiouridine), and ncm5U (5-carbamoylmethyl uridine). The elongator complex catalyzes formation of carboxymethyluridine in the wobble base at position 34 in tRNAs. It functions as a gamma-toxin target (TOT); disruption of the complex confers resistance to Kluyveromyces lactis toxin zymocin (pGKL1 killer toxin). May also be involved in sensitivity to Pichia inositovora toxin. This Saccharomyces cerevisiae (strain ATCC 204508 / S288c) (Baker's yeast) protein is Elongator complex protein 5 (IKI1).